Here is a 286-residue protein sequence, read N- to C-terminus: NFU1 iron-sulfur cluster scaffold homolog, mitochondrial (286 aa).

The N-terminal 66 residues, 1–66 (MSKLLTNTAL…RQIQLSGARN (66 aa)), are a transit peptide targeting the mitochondrion. A nifU region spans residues 182 to 250 (IKELLDTRIR…IPEVESVEQV (69 aa)). Cys-219 and Cys-222 together coordinate [4Fe-4S] cluster.

This sequence belongs to the NifU family.

It is found in the mitochondrion. Its function is as follows. Molecular scaffold for [Fe-S] cluster assembly of mitochondrial iron-sulfur proteins. The sequence is that of NFU1 iron-sulfur cluster scaffold homolog, mitochondrial from Drosophila ananassae (Fruit fly).